Here is an 841-residue protein sequence, read N- to C-terminus: Taste receptor type 1 member 1 (841 aa).

Residues 1 to 20 (MLLCTARLVGLQLLISCCWA) form the signal peptide. Residues 21 to 567 (FACHSTESSP…VFLALREHTS (547 aa)) are Extracellular-facing. 6 N-linked (GlcNAc...) asparagine glycosylation sites follow: N87, N88, N95, N291, N479, and N529. Residues 568 to 588 (WVLLAANTLLLLLLLGTAGLF) traverse the membrane as a helical segment. Over 589–603 (AWHLDTPVVRSAGGR) the chain is Cytoplasmic. Residues 604–624 (LCFLMLGSLAAGSGSLYGFFG) traverse the membrane as a helical segment. Topologically, residues 625 to 639 (EPTRPACLLRQALFA) are extracellular. The chain crosses the membrane as a helical span at residues 640 to 660 (LGFTIFLSCLTVRSFQLIIIF). At 661–680 (KFSTKVPTFYHAWVQNHGAG) the chain is on the cytoplasmic side. The helical transmembrane segment at 681–701 (LFVMISSAAQLLICLTWLVVW) threads the bilayer. Residues 702 to 725 (TPLPAREYQRFPHLVMLECTETNS) are Extracellular-facing. A helical transmembrane segment spans residues 726–746 (LGFILAFLYNGLLSISAFACS). Residues 747-761 (YLGKDLPENYNEAKC) lie on the Cytoplasmic side of the membrane. Residues 762 to 782 (VTFSLLFNFVSWIAFFTTASV) traverse the membrane as a helical segment. At 783–795 (YDGKYLPAANMMA) the chain is on the extracellular side. The chain crosses the membrane as a helical span at residues 796–816 (GLSSLSSGFGGYFLPKCYVIL). Over 817 to 841 (CRPDLNSTEHFQASIQDYTRRCGST) the chain is Cytoplasmic.

The protein belongs to the G-protein coupled receptor 3 family. TAS1R subfamily. Forms heterodimers with TAS1R3.

Its subcellular location is the cell membrane. In terms of biological role, putative taste receptor. TAS1R1/TAS1R3 responds to the umami taste stimulus (the taste of monosodium glutamate). Sequence differences within and between species can significantly influence the selectivity and specificity of taste responses. The protein is Taste receptor type 1 member 1 (TAS1R1) of Homo sapiens (Human).